A 318-amino-acid polypeptide reads, in one-letter code: Ferrochelatase (318 aa).

Residues histidine 186 and glutamate 264 each coordinate Fe cation.

Belongs to the ferrochelatase family.

It is found in the cytoplasm. The enzyme catalyses heme b + 2 H(+) = protoporphyrin IX + Fe(2+). Its pathway is porphyrin-containing compound metabolism; protoheme biosynthesis; protoheme from protoporphyrin-IX: step 1/1. Its function is as follows. Catalyzes the ferrous insertion into protoporphyrin IX. This is Ferrochelatase from Chlamydia felis (strain Fe/C-56) (Chlamydophila felis).